Here is a 38-residue protein sequence, read N- to C-terminus: Large ribosomal subunit protein bL36 (38 aa).

The protein belongs to the bacterial ribosomal protein bL36 family.

The chain is Large ribosomal subunit protein bL36 from Pseudothermotoga lettingae (strain ATCC BAA-301 / DSM 14385 / NBRC 107922 / TMO) (Thermotoga lettingae).